Consider the following 94-residue polypeptide: Small ribosomal subunit protein uS19 (94 aa).

Belongs to the universal ribosomal protein uS19 family.

Its function is as follows. Protein S19 forms a complex with S13 that binds strongly to the 16S ribosomal RNA. The sequence is that of Small ribosomal subunit protein uS19 from Dictyoglomus thermophilum (strain ATCC 35947 / DSM 3960 / H-6-12).